The sequence spans 383 residues: Arginine biosynthesis bifunctional protein ArgJ (383 aa).

Residues threonine 146, lysine 168, threonine 179, glutamate 259, asparagine 378, and threonine 383 each contribute to the substrate site. Residue threonine 179 is the Nucleophile of the active site.

This sequence belongs to the ArgJ family. In terms of assembly, heterotetramer of two alpha and two beta chains.

The protein resides in the cytoplasm. It catalyses the reaction N(2)-acetyl-L-ornithine + L-glutamate = N-acetyl-L-glutamate + L-ornithine. It carries out the reaction L-glutamate + acetyl-CoA = N-acetyl-L-glutamate + CoA + H(+). It functions in the pathway amino-acid biosynthesis; L-arginine biosynthesis; L-ornithine and N-acetyl-L-glutamate from L-glutamate and N(2)-acetyl-L-ornithine (cyclic): step 1/1. Its pathway is amino-acid biosynthesis; L-arginine biosynthesis; N(2)-acetyl-L-ornithine from L-glutamate: step 1/4. Its function is as follows. Catalyzes two activities which are involved in the cyclic version of arginine biosynthesis: the synthesis of N-acetylglutamate from glutamate and acetyl-CoA as the acetyl donor, and of ornithine by transacetylation between N(2)-acetylornithine and glutamate. This chain is Arginine biosynthesis bifunctional protein ArgJ, found in Thermobifida fusca (strain YX).